A 112-amino-acid polypeptide reads, in one-letter code: UPF0102 protein Cla_1413 (112 aa).

It belongs to the UPF0102 family.

In Campylobacter lari (strain RM2100 / D67 / ATCC BAA-1060), this protein is UPF0102 protein Cla_1413.